A 343-amino-acid chain; its full sequence is S-adenosylmethionine:tRNA ribosyltransferase-isomerase (343 aa).

The protein belongs to the QueA family. In terms of assembly, monomer.

Its subcellular location is the cytoplasm. The catalysed reaction is 7-aminomethyl-7-carbaguanosine(34) in tRNA + S-adenosyl-L-methionine = epoxyqueuosine(34) in tRNA + adenine + L-methionine + 2 H(+). Its pathway is tRNA modification; tRNA-queuosine biosynthesis. Transfers and isomerizes the ribose moiety from AdoMet to the 7-aminomethyl group of 7-deazaguanine (preQ1-tRNA) to give epoxyqueuosine (oQ-tRNA). The protein is S-adenosylmethionine:tRNA ribosyltransferase-isomerase of Coxiella burnetii (strain RSA 331 / Henzerling II).